Here is a 710-residue protein sequence, read N- to C-terminus: multidrug resistance regulator 2 (710 aa).

The segment at residues 11-37 (CDACRSRKIKCNRQTPCASCHKSKRDC) is a DNA-binding region (zn(2)-C6 fungal-type). The next 2 membrane-spanning stretches (helical) occupy residues 475-495 (DLVI…LYLF) and 525-545 (LFLA…TNFL).

It is found in the nucleus. The protein localises to the membrane. In terms of biological role, transcription factor that controls the expression of CDR1, the major multidrug efflux pump. Required for yeast cell adherence to silicone substrate and plays a role in virulence. The chain is multidrug resistance regulator 2 from Candida albicans (strain SC5314 / ATCC MYA-2876) (Yeast).